The sequence spans 105 residues: DNA-directed RNA polymerases I and III subunit RPAC2 (105 aa).

The protein belongs to the archaeal Rpo11/eukaryotic RPB11/RPC19 RNA polymerase subunit family. As to quaternary structure, component of the RNA polymerase I (Pol I) and RNA polymerase III (Pol III) complexes consisting of at least 13 and 17 subunits, respectively.

The protein resides in the nucleus. Functionally, DNA-dependent RNA polymerase catalyzes the transcription of DNA into RNA using the four ribonucleoside triphosphates as substrates. Common core component of RNA polymerases I and III which synthesize ribosomal RNA precursors and small RNAs, such as 5S rRNA and tRNAs, respectively. This Drosophila melanogaster (Fruit fly) protein is DNA-directed RNA polymerases I and III subunit RPAC2.